The sequence spans 372 residues: Queuine tRNA-ribosyltransferase (372 aa).

The Proton acceptor role is filled by Asp92. Substrate is bound by residues 92–96 (DSGGY), Asp146, Gln188, and Gly215. Residues 246–252 (GIGTIRE) form an RNA binding region. Asp265 acts as the Nucleophile in catalysis. The RNA binding; important for wobble base 34 recognition stretch occupies residues 270–274 (TRLGR). The Zn(2+) site is built by Cys303, Cys305, Cys308, and His334.

It belongs to the queuine tRNA-ribosyltransferase family. As to quaternary structure, homodimer. Within each dimer, one monomer is responsible for RNA recognition and catalysis, while the other monomer binds to the replacement base PreQ1. The cofactor is Zn(2+).

It catalyses the reaction 7-aminomethyl-7-carbaguanine + guanosine(34) in tRNA = 7-aminomethyl-7-carbaguanosine(34) in tRNA + guanine. Its pathway is tRNA modification; tRNA-queuosine biosynthesis. Functionally, catalyzes the base-exchange of a guanine (G) residue with the queuine precursor 7-aminomethyl-7-deazaguanine (PreQ1) at position 34 (anticodon wobble position) in tRNAs with GU(N) anticodons (tRNA-Asp, -Asn, -His and -Tyr). Catalysis occurs through a double-displacement mechanism. The nucleophile active site attacks the C1' of nucleotide 34 to detach the guanine base from the RNA, forming a covalent enzyme-RNA intermediate. The proton acceptor active site deprotonates the incoming PreQ1, allowing a nucleophilic attack on the C1' of the ribose to form the product. After dissociation, two additional enzymatic reactions on the tRNA convert PreQ1 to queuine (Q), resulting in the hypermodified nucleoside queuosine (7-(((4,5-cis-dihydroxy-2-cyclopenten-1-yl)amino)methyl)-7-deazaguanosine). This Prochlorococcus marinus (strain SARG / CCMP1375 / SS120) protein is Queuine tRNA-ribosyltransferase.